Reading from the N-terminus, the 106-residue chain is Phosphoribosyl-ATP pyrophosphatase (106 aa).

Belongs to the PRA-PH family.

Its subcellular location is the cytoplasm. The catalysed reaction is 1-(5-phospho-beta-D-ribosyl)-ATP + H2O = 1-(5-phospho-beta-D-ribosyl)-5'-AMP + diphosphate + H(+). The protein operates within amino-acid biosynthesis; L-histidine biosynthesis; L-histidine from 5-phospho-alpha-D-ribose 1-diphosphate: step 2/9. The sequence is that of Phosphoribosyl-ATP pyrophosphatase from Rhizorhabdus wittichii (strain DSM 6014 / CCUG 31198 / JCM 15750 / NBRC 105917 / EY 4224 / RW1) (Sphingomonas wittichii).